The chain runs to 445 residues: Glucose-6-phosphate isomerase (445 aa).

The Proton donor role is filled by E284. Residues H305 and K419 contribute to the active site.

Belongs to the GPI family.

It localises to the cytoplasm. It catalyses the reaction alpha-D-glucose 6-phosphate = beta-D-fructose 6-phosphate. The protein operates within carbohydrate biosynthesis; gluconeogenesis. It functions in the pathway carbohydrate degradation; glycolysis; D-glyceraldehyde 3-phosphate and glycerone phosphate from D-glucose: step 2/4. In terms of biological role, catalyzes the reversible isomerization of glucose-6-phosphate to fructose-6-phosphate. The chain is Glucose-6-phosphate isomerase from Leptospira interrogans serogroup Icterohaemorrhagiae serovar Lai (strain 56601).